A 524-amino-acid chain; its full sequence is Ribose import ATP-binding protein RbsA (524 aa).

ABC transporter domains follow at residues 17–252 (LQLD…GRSI) and 263–505 (IGQP…VSQV). Residue 49–56 (GENGAGKS) coordinates ATP.

This sequence belongs to the ABC transporter superfamily. Ribose importer (TC 3.A.1.2.1) family. In terms of assembly, the complex is composed of an ATP-binding protein (RbsA), two transmembrane proteins (RbsC) and a solute-binding protein (RbsB).

It localises to the cell membrane. The enzyme catalyses D-ribose(out) + ATP + H2O = D-ribose(in) + ADP + phosphate + H(+). Functionally, part of the ABC transporter complex RbsABC involved in ribose import. Responsible for energy coupling to the transport system. The sequence is that of Ribose import ATP-binding protein RbsA from Corynebacterium glutamicum (strain ATCC 13032 / DSM 20300 / JCM 1318 / BCRC 11384 / CCUG 27702 / LMG 3730 / NBRC 12168 / NCIMB 10025 / NRRL B-2784 / 534).